The sequence spans 61 residues: Keratin-associated protein 8-1 (61 aa).

Residues 13–49 (GCYWGSYGYPLGYSVGCGYGSTYSPVGYGLGYGYNGC) form an 11 X 2 AA repeats of G-[YCGS] region.

This sequence belongs to the KRTAP type 8 family. In terms of assembly, interacts with hair keratins. As to expression, expression restricted exclusively to the cortical cells of hair follicles.

In the hair cortex, hair keratin intermediate filaments are embedded in an interfilamentous matrix, consisting of hair keratin-associated proteins (KRTAP), which are essential for the formation of a rigid and resistant hair shaft through their extensive disulfide bond cross-linking with abundant cysteine residues of hair keratins. The matrix proteins include the high-sulfur and high-glycine-tyrosine keratins. The polypeptide is Keratin-associated protein 8-1 (Krtap8-1) (Mus musculus (Mouse)).